Here is a 327-residue protein sequence, read N- to C-terminus: Glycerol-3-phosphate dehydrogenase [NAD(P)+] (327 aa).

The NADPH site is built by tryptophan 13, histidine 33, and lysine 102. Residues lysine 102, glycine 130, and serine 132 each contribute to the sn-glycerol 3-phosphate site. Position 134 (alanine 134) interacts with NADPH. Sn-glycerol 3-phosphate is bound by residues lysine 185, aspartate 238, serine 248, arginine 249, and asparagine 250. Catalysis depends on lysine 185, which acts as the Proton acceptor. Residue arginine 249 participates in NADPH binding. Glutamate 275 serves as a coordination point for NADPH.

It belongs to the NAD-dependent glycerol-3-phosphate dehydrogenase family.

The protein resides in the cytoplasm. The enzyme catalyses sn-glycerol 3-phosphate + NAD(+) = dihydroxyacetone phosphate + NADH + H(+). The catalysed reaction is sn-glycerol 3-phosphate + NADP(+) = dihydroxyacetone phosphate + NADPH + H(+). It functions in the pathway membrane lipid metabolism; glycerophospholipid metabolism. Its function is as follows. Catalyzes the reduction of the glycolytic intermediate dihydroxyacetone phosphate (DHAP) to sn-glycerol 3-phosphate (G3P), the key precursor for phospholipid synthesis. In Vesicomyosocius okutanii subsp. Calyptogena okutanii (strain HA), this protein is Glycerol-3-phosphate dehydrogenase [NAD(P)+].